The following is a 120-amino-acid chain: PYEKIGAELVKEVAKKTDDVAGDGTTTATVLAQALVREGLRNVAAGANPLGLKRGIEKAVEKITETLLKSAKEVETKDQIAATAAISAGDLQIGELIAEAMDKVGNEGVITVEESQTFGL.

Position 23-27 (23-27 (DGTTT)) interacts with ATP.

It belongs to the chaperonin (HSP60) family. As to quaternary structure, forms a cylinder of 14 subunits composed of two heptameric rings stacked back-to-back. Interacts with the co-chaperonin GroES.

The protein localises to the cytoplasm. It carries out the reaction ATP + H2O + a folded polypeptide = ADP + phosphate + an unfolded polypeptide.. Together with its co-chaperonin GroES, plays an essential role in assisting protein folding. The GroEL-GroES system forms a nano-cage that allows encapsulation of the non-native substrate proteins and provides a physical environment optimized to promote and accelerate protein folding. This is Chaperonin GroEL from Mycolicibacterium pulveris (Mycobacterium pulveris).